The chain runs to 185 residues: UPF0301 protein IL2218 (185 aa).

Belongs to the UPF0301 (AlgH) family.

In Idiomarina loihiensis (strain ATCC BAA-735 / DSM 15497 / L2-TR), this protein is UPF0301 protein IL2218.